Consider the following 623-residue polypeptide: tRNA uridine 5-carboxymethylaminomethyl modification enzyme MnmG (623 aa).

Position 10 to 15 (10 to 15) interacts with FAD; sequence GGGHAG. 269–283 is an NAD(+) binding site; sequence GPRYCPSIEDKIVRF.

The protein belongs to the MnmG family. In terms of assembly, homodimer. Heterotetramer of two MnmE and two MnmG subunits. The cofactor is FAD.

It localises to the cytoplasm. Functionally, NAD-binding protein involved in the addition of a carboxymethylaminomethyl (cmnm) group at the wobble position (U34) of certain tRNAs, forming tRNA-cmnm(5)s(2)U34. The chain is tRNA uridine 5-carboxymethylaminomethyl modification enzyme MnmG from Rhizobium meliloti (strain 1021) (Ensifer meliloti).